Reading from the N-terminus, the 435-residue chain is Putative BTB/POZ domain-containing protein L275 (435 aa).

Residues 80-149 (YDGYVYINVG…IKGKQNDNHN (70 aa)) form the BTB domain.

This sequence belongs to the mimivirus BTB/WD family.

The polypeptide is Putative BTB/POZ domain-containing protein L275 (Acanthamoeba polyphaga mimivirus (APMV)).